Consider the following 340-residue polypeptide: MTEQQPIAVLGGGSFGTAIANLLAENGQAVRQWMRDPEQAEAIRTRRENPRYLKGVKVHPGVEPVTDLERTLADCQLIFVALPSSALRKVLQPHQAALTDKLLVSLTKGIEAHTFKLMSEILEEIAPQARIGVISGPNLAREIAEHELTATVVASEDDELCARVQAALHGRTFRVYASRDRFGVELGGALKNVYAIMAGLAAAMDMGENTRSMLITRALAEMTRFAVKLGANPMTFLGLAGVGDLIVTCSSPKSRNYQVGHALGEGLSLEEAVSRMGETAEGVNTLKVLKEKSDEMQVYMPLVAGLHAILFEGRTLAQVIQLLMRGEPKTDVDFIPTTGF.

4 residues coordinate NADPH: serine 14, phenylalanine 15, arginine 35, and lysine 108. Sn-glycerol 3-phosphate-binding residues include lysine 108 and glycine 136. Position 140 (alanine 140) interacts with NADPH. Positions 191, 244, 254, 255, and 256 each coordinate sn-glycerol 3-phosphate. Catalysis depends on lysine 191, which acts as the Proton acceptor. Arginine 255 contacts NADPH. Glutamate 281 serves as a coordination point for NADPH.

This sequence belongs to the NAD-dependent glycerol-3-phosphate dehydrogenase family.

It is found in the cytoplasm. The enzyme catalyses sn-glycerol 3-phosphate + NAD(+) = dihydroxyacetone phosphate + NADH + H(+). The catalysed reaction is sn-glycerol 3-phosphate + NADP(+) = dihydroxyacetone phosphate + NADPH + H(+). It participates in membrane lipid metabolism; glycerophospholipid metabolism. In terms of biological role, catalyzes the reduction of the glycolytic intermediate dihydroxyacetone phosphate (DHAP) to sn-glycerol 3-phosphate (G3P), the key precursor for phospholipid synthesis. This is Glycerol-3-phosphate dehydrogenase [NAD(P)+] from Pseudomonas aeruginosa (strain LESB58).